Here is a 137-residue protein sequence, read N- to C-terminus: Large ribosomal subunit protein uL16 (137 aa).

It belongs to the universal ribosomal protein uL16 family. In terms of assembly, part of the 50S ribosomal subunit.

Binds 23S rRNA and is also seen to make contacts with the A and possibly P site tRNAs. This Rhizobium meliloti (strain 1021) (Ensifer meliloti) protein is Large ribosomal subunit protein uL16.